Here is a 104-residue protein sequence, read N- to C-terminus: MKDHEYHALTDAFFQYVEDTVDAGYPDIDCERAGGVLTLSFENKTKVIINKQEPLHQIWVATRENGFHFELQGESWIDNRFGHELKTLLSKACTTQAGEPVQFP.

It belongs to the frataxin family.

Functionally, involved in iron-sulfur (Fe-S) cluster assembly. May act as a regulator of Fe-S biogenesis. The chain is Iron-sulfur cluster assembly protein CyaY from Aeromonas hydrophila subsp. hydrophila (strain ATCC 7966 / DSM 30187 / BCRC 13018 / CCUG 14551 / JCM 1027 / KCTC 2358 / NCIMB 9240 / NCTC 8049).